The chain runs to 106 residues: Urease subunit beta (106 aa).

The protein belongs to the urease beta subunit family. Heterotrimer of UreA (gamma), UreB (beta) and UreC (alpha) subunits. Three heterotrimers associate to form the active enzyme.

It is found in the cytoplasm. It carries out the reaction urea + 2 H2O + H(+) = hydrogencarbonate + 2 NH4(+). It functions in the pathway nitrogen metabolism; urea degradation; CO(2) and NH(3) from urea (urease route): step 1/1. This Prochlorococcus marinus (strain MIT 9312) protein is Urease subunit beta.